We begin with the raw amino-acid sequence, 503 residues long: ATP synthase subunit alpha (503 aa).

Position 170–177 (170–177) interacts with ATP; that stretch reads GDRKTGKT.

This sequence belongs to the ATPase alpha/beta chains family. As to quaternary structure, F-type ATPases have 2 components, CF(1) - the catalytic core - and CF(0) - the membrane proton channel. CF(1) has five subunits: alpha(3), beta(3), gamma(1), delta(1), epsilon(1). CF(0) has four main subunits: a, b, b' and c.

It localises to the cellular thylakoid membrane. The enzyme catalyses ATP + H2O + 4 H(+)(in) = ADP + phosphate + 5 H(+)(out). Functionally, produces ATP from ADP in the presence of a proton gradient across the membrane. The alpha chain is a regulatory subunit. The chain is ATP synthase subunit alpha from Gloeothece citriformis (strain PCC 7424) (Cyanothece sp. (strain PCC 7424)).